Consider the following 206-residue polypeptide: MTKSEKRQHDILRYIFSHVSDSGYPPTVREICNAVGLSSTSTVHGHLSKLESKGLIKRDPTKPRAIEITLAGLEMLDELPNKTQIPIVGTVTAGEPILAVEENRDYFPLPPYFESADDLFMLSIRGESMINAGILDGDQVIVRKQSSANNGEIVIAMTEENEATCKRFFKEDGYYRLQPENDTMDPIILENVTILGKVVGLYRDLI.

A DNA-binding region (H-T-H motif) is located at residues 28–48 (VREICNAVGLSSTSTVHGHLS). Catalysis depends on for autocatalytic cleavage activity residues Ser-128 and Lys-166.

Belongs to the peptidase S24 family. In terms of assembly, homodimer.

The enzyme catalyses Hydrolysis of Ala-|-Gly bond in repressor LexA.. In terms of biological role, represses a number of genes involved in the response to DNA damage (SOS response), including recA and lexA. In the presence of single-stranded DNA, RecA interacts with LexA causing an autocatalytic cleavage which disrupts the DNA-binding part of LexA, leading to derepression of the SOS regulon and eventually DNA repair. In Ligilactobacillus salivarius (strain UCC118) (Lactobacillus salivarius), this protein is LexA repressor.